Consider the following 56-residue polypeptide: Repressor-like protein SSo7c4 (56 aa).

The SpoVT-AbrB domain occupies 4–51; sequence EEIVKVSRNYQVTIPAKVRQKFQIKEGDLVKVTFDESGGVVKIQLLDS.

This chain is Repressor-like protein SSo7c4, found in Saccharolobus solfataricus (strain ATCC 35092 / DSM 1617 / JCM 11322 / P2) (Sulfolobus solfataricus).